We begin with the raw amino-acid sequence, 280 residues long: Ribosomal RNA small subunit methyltransferase A (280 aa).

Positions 24, 49, 70, 95, and 118 each coordinate S-adenosyl-L-methionine.

This sequence belongs to the class I-like SAM-binding methyltransferase superfamily. rRNA adenine N(6)-methyltransferase family. RsmA subfamily.

The protein resides in the cytoplasm. The enzyme catalyses adenosine(1518)/adenosine(1519) in 16S rRNA + 4 S-adenosyl-L-methionine = N(6)-dimethyladenosine(1518)/N(6)-dimethyladenosine(1519) in 16S rRNA + 4 S-adenosyl-L-homocysteine + 4 H(+). Specifically dimethylates two adjacent adenosines (A1518 and A1519) in the loop of a conserved hairpin near the 3'-end of 16S rRNA in the 30S particle. May play a critical role in biogenesis of 30S subunits. In Syntrophus aciditrophicus (strain SB), this protein is Ribosomal RNA small subunit methyltransferase A.